The sequence spans 316 residues: Phosphate acyltransferase (316 aa).

This sequence belongs to the PlsX family. In terms of assembly, homodimer. Probably interacts with PlsY.

Its subcellular location is the cytoplasm. It carries out the reaction a fatty acyl-[ACP] + phosphate = an acyl phosphate + holo-[ACP]. The protein operates within lipid metabolism; phospholipid metabolism. Its function is as follows. Catalyzes the reversible formation of acyl-phosphate (acyl-PO(4)) from acyl-[acyl-carrier-protein] (acyl-ACP). This enzyme utilizes acyl-ACP as fatty acyl donor, but not acyl-CoA. The polypeptide is Phosphate acyltransferase (Chlamydia felis (strain Fe/C-56) (Chlamydophila felis)).